The primary structure comprises 382 residues: Aminotransferase FGSG_00049 (382 aa).

Position 80 (arginine 80) interacts with pyridoxal 5'-phosphate. The residue at position 181 (lysine 181) is an N6-(pyridoxal phosphate)lysine. Residue glutamate 217 coordinates pyridoxal 5'-phosphate.

It belongs to the class-IV pyridoxal-phosphate-dependent aminotransferase family. The cofactor is pyridoxal 5'-phosphate.

It functions in the pathway mycotoxin biosynthesis. Functionally, aminotransferase; part of the gene cluster that mediates the biosynthesis of gramillins A and B, bicyclic lipopeptides that induce cell death in maize leaves but not in wheat leaves. The nonribosomal peptide synthetase GRA1 incorporates respectively a glutamic adic (Glu), a leucine (Leu), a serine (Ser), a hydroxyglutamine (HOGln), a 2-amino decanoic acid, and 2 cysteins (CysB and CysA). The biosynthesis of 2-amino decanoic acid incorporated in gramillins could be initiated by a fatty acid synthase composed of the alpha and beta subunits FGSG_00036 and FGSG_11656. The cytochrome P450 monooxygenase FGSG_15680 could hydroxylate the fatty acid chain. Subsequent oxidation to the ketone by the oxidoreductase FGSG_00048 and transamination by aminotransferase FGSG_00049 could form 2-amino-decanoic acid. On the other hand, FGSG_15680 could also be responsible for the HO-modified glutamine at the gamma-position. Whether hydroxylation occurs on the fully assembled product or on the Gln residue prior to assembly into the gramillins requires further proof. The thioredoxin FGSG_00043 could also be required for the disulfide-bond formation between CysA and CysB. The specific involvement of the remaining proteins from the cluster is more difficult to discern, but could have broader regulatory (FGSG_00040 and FGSG_11657) or enzymatic functions (FGSG_00044 and FGSG_00045). The final C-domain of GRA1 does not possess the expected sequence of a termination CT domain, often implicated in macrocyclization and release of a cyclopeptidein fungal NRPs; and the thioesterase FGSG_00047 may act in concert with the terminal C-domain of GRA1 to catalyze the formation of the macrocyclic anhydride and release of the products. The polypeptide is Aminotransferase FGSG_00049 (Gibberella zeae (strain ATCC MYA-4620 / CBS 123657 / FGSC 9075 / NRRL 31084 / PH-1) (Wheat head blight fungus)).